The sequence spans 204 residues: ATP synthase subunit b 2 (204 aa).

The chain crosses the membrane as a helical span at residues 50 to 70 (IFWLAVTFGLLLFLMSKVALP).

The protein belongs to the ATPase B chain family. As to quaternary structure, F-type ATPases have 2 components, F(1) - the catalytic core - and F(0) - the membrane proton channel. F(1) has five subunits: alpha(3), beta(3), gamma(1), delta(1), epsilon(1). F(0) has three main subunits: a(1), b(2) and c(10-14). The alpha and beta chains form an alternating ring which encloses part of the gamma chain. F(1) is attached to F(0) by a central stalk formed by the gamma and epsilon chains, while a peripheral stalk is formed by the delta and b chains.

The protein localises to the cell inner membrane. In terms of biological role, f(1)F(0) ATP synthase produces ATP from ADP in the presence of a proton or sodium gradient. F-type ATPases consist of two structural domains, F(1) containing the extramembraneous catalytic core and F(0) containing the membrane proton channel, linked together by a central stalk and a peripheral stalk. During catalysis, ATP synthesis in the catalytic domain of F(1) is coupled via a rotary mechanism of the central stalk subunits to proton translocation. Functionally, component of the F(0) channel, it forms part of the peripheral stalk, linking F(1) to F(0). The b'-subunit is a diverged and duplicated form of b found in plants and photosynthetic bacteria. This is ATP synthase subunit b 2 (atpF2) from Rhodospirillum centenum (strain ATCC 51521 / SW).